The primary structure comprises 360 residues: Photosystem II protein D1 3 (360 aa).

The next 3 membrane-spanning stretches (helical) occupy residues 29 to 46 (YVGW…AATV), 118 to 133 (HFLI…QWEL), and 142 to 156 (WICV…SATA). Residue His-118 participates in chlorophyll a binding. Residue Tyr-126 participates in pheophytin a binding. Residues Asp-170 and Glu-189 each contribute to the [CaMn4O5] cluster site. Residues 197–218 (FHMLGVAGVFGGSLFSAMHGSL) traverse the membrane as a helical segment. His-198 is a binding site for chlorophyll a. Residues His-215 and 264–265 (SF) each bind a quinone. Fe cation is bound at residue His-215. His-272 serves as a coordination point for Fe cation. A helical membrane pass occupies residues 274-288 (FLAAWPVIGIWFTAL). His-332, Glu-333, Asp-342, and Ala-344 together coordinate [CaMn4O5] cluster. Residues 345–360 (AGEVAPVALTAPAING) constitute a propeptide that is removed on maturation.

The protein belongs to the reaction center PufL/M/PsbA/D family. PSII is composed of 1 copy each of membrane proteins PsbA, PsbB, PsbC, PsbD, PsbE, PsbF, PsbH, PsbI, PsbJ, PsbK, PsbL, PsbM, PsbT, PsbX, PsbY, PsbZ, Psb30/Ycf12, peripheral proteins PsbO, CyanoQ (PsbQ), PsbU, PsbV and a large number of cofactors. It forms dimeric complexes. Requires The D1/D2 heterodimer binds P680, chlorophylls that are the primary electron donor of PSII, and subsequent electron acceptors. It shares a non-heme iron and each subunit binds pheophytin, quinone, additional chlorophylls, carotenoids and lipids. D1 provides most of the ligands for the Mn4-Ca-O5 cluster of the oxygen-evolving complex (OEC). There is also a Cl(-1) ion associated with D1 and D2, which is required for oxygen evolution. The PSII complex binds additional chlorophylls, carotenoids and specific lipids. as cofactor. Post-translationally, tyr-161 forms a radical intermediate that is referred to as redox-active TyrZ, YZ or Y-Z. C-terminally processed by CtpA; processing is essential to allow assembly of the oxygen-evolving complex and thus photosynthetic growth.

Its subcellular location is the cellular thylakoid membrane. The enzyme catalyses 2 a plastoquinone + 4 hnu + 2 H2O = 2 a plastoquinol + O2. Functionally, photosystem II (PSII) is a light-driven water:plastoquinone oxidoreductase that uses light energy to abstract electrons from H(2)O, generating O(2) and a proton gradient subsequently used for ATP formation. It consists of a core antenna complex that captures photons, and an electron transfer chain that converts photonic excitation into a charge separation. The D1/D2 (PsbA/PsbD) reaction center heterodimer binds P680, the primary electron donor of PSII as well as several subsequent electron acceptors. The chain is Photosystem II protein D1 3 from Trichormus variabilis (strain ATCC 29413 / PCC 7937) (Anabaena variabilis).